A 93-amino-acid chain; its full sequence is uncharacterized protein (93 aa).

The helical transmembrane segment at 68–88 (WLVTVVLANGVVSLFLLGGLI) threads the bilayer.

The protein localises to the membrane. This is an uncharacterized protein from Mycoplasma pneumoniae (strain ATCC 29342 / M129 / Subtype 1) (Mycoplasmoides pneumoniae).